The chain runs to 275 residues: uncharacterized protein (275 aa).

Positions 1-162 (NLFSVIVSLI…ITSYWTEVQR (162 aa)) constitute an ABC transmembrane type-1 domain. Transmembrane regions (helical) follow at residues 21–41 (LYLV…GNIM), 106–126 (IMNL…YYLM), and 137–157 (FAYV…TSYW).

Its subcellular location is the cell membrane. This is an uncharacterized protein from Staphylococcus epidermidis.